The primary structure comprises 203 residues: MNNLTQGKFITFEGGEGSGKSTQSQMLYEYLKSQNTPVILTREVGGTIVSEKMREILVHEELLPMSELLQAMAARYDHMVRKIIPVLKEGYIVICDRFLDSTACYQGLELENGIDLVYNLHKTLMPPLMPDITFFIDVEPDTAIKRVNLRNMSNKFDIRGIDFYNKIYDCFKELSNRFPARIKTIKASDLSMLEVHELIKKHL.

Position 14 to 21 (14 to 21 (GGEGSGKS)) interacts with ATP.

Belongs to the thymidylate kinase family.

The enzyme catalyses dTMP + ATP = dTDP + ADP. In terms of biological role, phosphorylation of dTMP to form dTDP in both de novo and salvage pathways of dTTP synthesis. The chain is Thymidylate kinase from Rickettsia canadensis (strain McKiel).